We begin with the raw amino-acid sequence, 588 residues long: BTB/POZ domain-containing protein At3g26490 (588 aa).

The BTB domain occupies 28-99 (NDLVIQVKST…CYGITITLCA (72 aa)). The NPH3 domain occupies 218-507 (RWWGEDLAEL…VQILFVEQAR (290 aa)). S376 and S378 each carry phosphoserine. The residue at position 448 (Y448) is a Phosphotyrosine. The tract at residues 529–554 (FTTRREEGGQEEEERDETKPSGGFLQ) is disordered.

It belongs to the NPH3 family.

Its pathway is protein modification; protein ubiquitination. Its function is as follows. May act as a substrate-specific adapter of an E3 ubiquitin-protein ligase complex (CUL3-RBX1-BTB) which mediates the ubiquitination and subsequent proteasomal degradation of target proteins. The polypeptide is BTB/POZ domain-containing protein At3g26490 (Arabidopsis thaliana (Mouse-ear cress)).